Reading from the N-terminus, the 402-residue chain is Endo-polygalacturonase (402 aa).

Positions 1-23 (MEYQSGKRVLSLSLGLIGLFSAS) are cleaved as a signal peptide. 2 cysteine pairs are disulfide-bonded: C41-C62 and C115-C125. The active-site Proton donor is D249. H277 is an active-site residue.

Belongs to the glycosyl hydrolase 28 family. As to quaternary structure, monomer.

It localises to the secreted. The catalysed reaction is (1,4-alpha-D-galacturonosyl)n+m + H2O = (1,4-alpha-D-galacturonosyl)n + (1,4-alpha-D-galacturonosyl)m.. Involved in maceration and soft-rotting of plant tissue. In Pectobacterium parmentieri, this protein is Endo-polygalacturonase (pehA).